Reading from the N-terminus, the 149-residue chain is Transcriptional repressor NrdR (149 aa).

The segment at 3–34 (CPFCFAVDTKVIDSRLVGEGSSVRRRRQCLVC) is a zinc-finger region. Positions 49 to 139 (PRVVKSNDVR…VYRSFEDIKE (91 aa)) constitute an ATP-cone domain.

The protein belongs to the NrdR family. It depends on Zn(2+) as a cofactor.

Functionally, negatively regulates transcription of bacterial ribonucleotide reductase nrd genes and operons by binding to NrdR-boxes. The protein is Transcriptional repressor NrdR of Escherichia fergusonii (strain ATCC 35469 / DSM 13698 / CCUG 18766 / IAM 14443 / JCM 21226 / LMG 7866 / NBRC 102419 / NCTC 12128 / CDC 0568-73).